A 453-amino-acid polypeptide reads, in one-letter code: Chromosomal replication initiator protein DnaA (453 aa).

Residues 1 to 73 (MELSPQDLWT…ADVVEEILGY (73 aa)) are domain I, interacts with DnaA modulators. Residues 73 to 110 (YSIDIQLTSTQGENIAIVGETQVSAYYPTLSGEHPKPI) are domain II. Residues 111 to 327 (KLNPKYTFSR…GALIRAITYI (217 aa)) form a domain III, AAA+ region region. Residues glycine 155, glycine 157, lysine 158, and threonine 159 each contribute to the ATP site. The tract at residues 328-453 (SISGLSMTVE…HLASRTQKTT (126 aa)) is domain IV, binds dsDNA.

This sequence belongs to the DnaA family. As to quaternary structure, oligomerizes as a right-handed, spiral filament on DNA at oriC.

It is found in the cytoplasm. In terms of biological role, plays an essential role in the initiation and regulation of chromosomal replication. ATP-DnaA binds to the origin of replication (oriC) to initiate formation of the DNA replication initiation complex once per cell cycle. Binds the DnaA box (a 9 base pair repeat at the origin) and separates the double-stranded (ds)DNA. Forms a right-handed helical filament on oriC DNA; dsDNA binds to the exterior of the filament while single-stranded (ss)DNA is stabiized in the filament's interior. The ATP-DnaA-oriC complex binds and stabilizes one strand of the AT-rich DNA unwinding element (DUE), permitting loading of DNA polymerase. After initiation quickly degrades to an ADP-DnaA complex that is not apt for DNA replication. Binds acidic phospholipids. The chain is Chromosomal replication initiator protein DnaA from Gloeothece citriformis (strain PCC 7424) (Cyanothece sp. (strain PCC 7424)).